We begin with the raw amino-acid sequence, 274 residues long: Thymidylate synthase (274 aa).

Arg-21 serves as a coordination point for dUMP. His-51 is a (6R)-5,10-methylene-5,6,7,8-tetrahydrofolate binding site. Position 123-124 (123-124 (RR)) interacts with dUMP. The active-site Nucleophile is Cys-156. DUMP-binding positions include 176 to 179 (RSAD), Asn-187, and 217 to 219 (HIY). Position 179 (Asp-179) interacts with (6R)-5,10-methylene-5,6,7,8-tetrahydrofolate. (6R)-5,10-methylene-5,6,7,8-tetrahydrofolate is bound at residue Ser-273.

Belongs to the thymidylate synthase family. Bacterial-type ThyA subfamily. Homodimer.

The protein resides in the cytoplasm. It carries out the reaction dUMP + (6R)-5,10-methylene-5,6,7,8-tetrahydrofolate = 7,8-dihydrofolate + dTMP. It participates in pyrimidine metabolism; dTTP biosynthesis. In terms of biological role, catalyzes the reductive methylation of 2'-deoxyuridine-5'-monophosphate (dUMP) to 2'-deoxythymidine-5'-monophosphate (dTMP) while utilizing 5,10-methylenetetrahydrofolate (mTHF) as the methyl donor and reductant in the reaction, yielding dihydrofolate (DHF) as a by-product. This enzymatic reaction provides an intracellular de novo source of dTMP, an essential precursor for DNA biosynthesis. The chain is Thymidylate synthase from Francisella tularensis subsp. novicida (strain U112).